A 957-amino-acid polypeptide reads, in one-letter code: Valine--tRNA ligase (957 aa).

The short motif at 47-57 (PNITGQLHLGH) is the 'HIGH' region element. The 'KMSKS' region signature appears at 558-562 (KMSKS). Residue lysine 561 coordinates ATP. Residues 889-918 (FNKENEINRLKKESELINRKIETIQKLLDD) are a coiled coil.

Belongs to the class-I aminoacyl-tRNA synthetase family. ValS type 1 subfamily. As to quaternary structure, monomer.

Its subcellular location is the cytoplasm. The enzyme catalyses tRNA(Val) + L-valine + ATP = L-valyl-tRNA(Val) + AMP + diphosphate. In terms of biological role, catalyzes the attachment of valine to tRNA(Val). As ValRS can inadvertently accommodate and process structurally similar amino acids such as threonine, to avoid such errors, it has a 'posttransfer' editing activity that hydrolyzes mischarged Thr-tRNA(Val) in a tRNA-dependent manner. This is Valine--tRNA ligase from Blochmanniella pennsylvanica (strain BPEN).